We begin with the raw amino-acid sequence, 121 residues long: Aspartate 1-decarboxylase (121 aa).

Ser25 serves as the catalytic Schiff-base intermediate with substrate; via pyruvic acid. Ser25 carries the post-translational modification Pyruvic acid (Ser). Substrate is bound at residue Thr57. The active-site Proton donor is Tyr58. Gly73 to Ala75 is a binding site for substrate.

Belongs to the PanD family. As to quaternary structure, heterooctamer of four alpha and four beta subunits. The cofactor is pyruvate. Is synthesized initially as an inactive proenzyme, which is activated by self-cleavage at a specific serine bond to produce a beta-subunit with a hydroxyl group at its C-terminus and an alpha-subunit with a pyruvoyl group at its N-terminus.

Its subcellular location is the cytoplasm. The enzyme catalyses L-aspartate + H(+) = beta-alanine + CO2. Its pathway is cofactor biosynthesis; (R)-pantothenate biosynthesis; beta-alanine from L-aspartate: step 1/1. Catalyzes the pyruvoyl-dependent decarboxylation of aspartate to produce beta-alanine. The sequence is that of Aspartate 1-decarboxylase from Maricaulis maris (strain MCS10) (Caulobacter maris).